Here is a 501-residue protein sequence, read N- to C-terminus: Lysine--tRNA ligase (501 aa).

Mg(2+) is bound by residues E411 and E418.

The protein belongs to the class-II aminoacyl-tRNA synthetase family. Homodimer. Mg(2+) is required as a cofactor.

It localises to the cytoplasm. The catalysed reaction is tRNA(Lys) + L-lysine + ATP = L-lysyl-tRNA(Lys) + AMP + diphosphate. This is Lysine--tRNA ligase from Pseudomonas aeruginosa (strain UCBPP-PA14).